A 227-amino-acid polypeptide reads, in one-letter code: Interleukin-6 (227 aa).

The first 22 residues, methionine 1–glycine 22, serve as a signal peptide directing secretion. The interval proline 24–serine 45 is disordered. Cysteine 93 and cysteine 103 are joined by a disulfide.

This sequence belongs to the IL-6 superfamily. In terms of assembly, component of a hexamer of two molecules each of IL6, IL6R and IL6ST; first binds to IL6R to associate with the signaling subunit IL6ST. After induction, highly expressed in spleen. Can also be expressed in kidney after incubation with PHA.

It localises to the secreted. Cytokine with a wide variety of biological functions in immunity, tissue regeneration, and metabolism. Binds to IL6R, then the complex associates to the signaling subunit IL6ST/gp130 to trigger the intracellular IL6-signaling pathway. The interaction with the membrane-bound IL6R and IL6ST stimulates 'classic signaling', whereas the binding of IL6 and soluble IL6R to IL6ST stimulates 'trans-signaling'. Alternatively, 'cluster signaling' occurs when membrane-bound IL6:IL6R complexes on transmitter cells activate IL6ST receptors on neighboring receiver cells. This chain is Interleukin-6 (il6), found in Takifugu rubripes (Japanese pufferfish).